A 214-amino-acid chain; its full sequence is Ribonuclease HII (214 aa).

The RNase H type-2 domain occupies 26–214 (EIVCGVDEAG…PVRAALDLIR (189 aa)). 3 residues coordinate a divalent metal cation: aspartate 32, glutamate 33, and aspartate 124.

This sequence belongs to the RNase HII family. Requires Mn(2+) as cofactor. Mg(2+) is required as a cofactor.

The protein localises to the cytoplasm. It carries out the reaction Endonucleolytic cleavage to 5'-phosphomonoester.. Its function is as follows. Endonuclease that specifically degrades the RNA of RNA-DNA hybrids. In Burkholderia lata (strain ATCC 17760 / DSM 23089 / LMG 22485 / NCIMB 9086 / R18194 / 383), this protein is Ribonuclease HII.